The primary structure comprises 1205 residues: Plasma membrane calcium-transporting ATPase 1 (1205 aa).

At 2-104 (GDMANNSVAY…KTFLQLVWEA (103 aa)) the chain is on the cytoplasmic side. The tract at residues 94-111 (PKTFLQLVWEALQDVTLI) is calmodulin-binding subdomain A. The chain crosses the membrane as a helical span at residues 105–125 (LQDVTLIILEIAAVVSLGLSF). Residues 126-153 (YQPPGGNEALCGSVNVGEEEEESEAGWI) lie on the Extracellular side of the membrane. A helical membrane pass occupies residues 154–174 (EGAAILLSVVCVVLVTAFNDW). Residues 175–351 (SKEKQFRGLQ…KEKSVLQGKL (177 aa)) lie on the Cytoplasmic side of the membrane. The tract at residues 296 to 343 (EEEKEKEKKDKKTKAQDGAAMEMQPLKSEDGVDGDEKDKKRSNLPKKE) is disordered. Composition is skewed to basic and acidic residues over residues 300 to 310 (EKEKKDKKTKA) and 322 to 343 (KSED…PKKE). Residues 352 to 371 (TKLAVQIGKAGLLMSAITVI) traverse the membrane as a helical segment. The Extracellular portion of the chain corresponds to 372 to 403 (ILVLYFVIDTSWVQKRPWLAECTPIYIQYFVK). Residues 404–424 (FFIIGVTVLVVAVPEGLPLAV) form a helical membrane-spanning segment. The Cytoplasmic portion of the chain corresponds to 425 to 840 (TISLAYSVKK…RNVYDSISKF (416 aa)). The 4-aspartylphosphate intermediate role is filled by aspartate 460. Mg(2+)-binding residues include aspartate 460, threonine 462, and aspartate 782. Residues 841–861 (LQFQLTVNVVAVIVAFTGACI) traverse the membrane as a helical segment. Residues 862–868 (TQDSPLK) lie on the Extracellular side of the membrane. A helical membrane pass occupies residues 869-889 (AVQMLWVNLIMDTLASLALAT). Topologically, residues 890–912 (EPPTEALLLRKPYGRNKPLISRT) are cytoplasmic. The helical transmembrane segment at 913 to 933 (MMKNILGHAFYQLVVVFTLLF) threads the bilayer. Residues 934 to 956 (AGEKIFDIDSGRNAPLHAPPSEH) lie on the Extracellular side of the membrane. The chain crosses the membrane as a helical span at residues 957–976 (YTIVFNTFVMMQLFNEINAR). Topologically, residues 977–990 (KIHGERNVFEGIFN) are cytoplasmic. The chain crosses the membrane as a helical span at residues 991–1012 (NAIFCTIVLGTFVVQIIIVQFG). Topologically, residues 1013–1024 (GKPFSCSKLSIE) are extracellular. Residues 1025 to 1045 (QWLWSVFLGMGTLLWGQLIST) traverse the membrane as a helical segment. Residues 1046–1205 (IPTSRLKFLK…SPLHSLETSL (160 aa)) are Cytoplasmic-facing. Threonine 1101 bears the Phosphothreonine; by PKC mark. Positions 1145–1205 (PLIDDTDAED…SPLHSLETSL (61 aa)) are disordered. Over residues 1183–1205 (TDMNKSATSSSPGSPLHSLETSL) the composition is skewed to polar residues.

This sequence belongs to the cation transport ATPase (P-type) (TC 3.A.3) family. Type IIB subfamily.

It localises to the cell membrane. The enzyme catalyses Ca(2+)(in) + ATP + H2O = Ca(2+)(out) + ADP + phosphate + H(+). Functionally, catalyzes the hydrolysis of ATP coupled with the transport of calcium from the cytoplasm to the extracellular space thereby maintaining intracellular calcium homeostasis. The sequence is that of Plasma membrane calcium-transporting ATPase 1 from Gallus gallus (Chicken).